Consider the following 140-residue polypeptide: uncharacterized protein (140 aa).

2 consecutive transmembrane segments (helical) span residues 4–21 (ILKIGILGFGAVFGYLFG) and 26–48 (LVKVLVCFIVADYISGLLASGYL).

The protein belongs to the bacteriophage holin family. Cp-1 holin subfamily.

It is found in the cell membrane. This is an uncharacterized protein from Listeria innocua serovar 6a (strain ATCC BAA-680 / CLIP 11262).